The primary structure comprises 236 residues: 7-cyano-7-deazaguanine synthase (236 aa).

21–31 (LSGGLDSATVL) serves as a coordination point for ATP. Residues cysteine 202, cysteine 212, cysteine 215, and cysteine 218 each contribute to the Zn(2+) site.

The protein belongs to the QueC family. Zn(2+) is required as a cofactor.

The catalysed reaction is 7-carboxy-7-deazaguanine + NH4(+) + ATP = 7-cyano-7-deazaguanine + ADP + phosphate + H2O + H(+). It functions in the pathway purine metabolism; 7-cyano-7-deazaguanine biosynthesis. Catalyzes the ATP-dependent conversion of 7-carboxy-7-deazaguanine (CDG) to 7-cyano-7-deazaguanine (preQ(0)). This chain is 7-cyano-7-deazaguanine synthase, found in Frankia casuarinae (strain DSM 45818 / CECT 9043 / HFP020203 / CcI3).